A 125-amino-acid polypeptide reads, in one-letter code: Holo-[acyl-carrier-protein] synthase (125 aa).

2 residues coordinate Mg(2+): aspartate 8 and glutamate 56.

It belongs to the P-Pant transferase superfamily. AcpS family. The cofactor is Mg(2+).

The protein resides in the cytoplasm. It catalyses the reaction apo-[ACP] + CoA = holo-[ACP] + adenosine 3',5'-bisphosphate + H(+). Its function is as follows. Transfers the 4'-phosphopantetheine moiety from coenzyme A to a Ser of acyl-carrier-protein. This is Holo-[acyl-carrier-protein] synthase from Borrelia hermsii (strain HS1 / DAH).